Reading from the N-terminus, the 116-residue chain is Large ribosomal subunit protein bL19 (116 aa).

The protein belongs to the bacterial ribosomal protein bL19 family.

In terms of biological role, this protein is located at the 30S-50S ribosomal subunit interface and may play a role in the structure and function of the aminoacyl-tRNA binding site. This is Large ribosomal subunit protein bL19 from Staphylococcus aureus (strain USA300).